A 172-amino-acid chain; its full sequence is Lipoprotein signal peptidase (172 aa).

A run of 2 helical transmembrane segments spans residues 70-90 (ERWLLVAGTALIAAGIVAWIW) and 94-114 (AKGDVVALGLVLGGAIGNIAD). Active-site residues include aspartate 123 and aspartate 142. Residues 134–154 (PFLVFNVADAAITIGVLILVL) form a helical membrane-spanning segment.

Belongs to the peptidase A8 family.

Its subcellular location is the cell inner membrane. It carries out the reaction Release of signal peptides from bacterial membrane prolipoproteins. Hydrolyzes -Xaa-Yaa-Zaa-|-(S,diacylglyceryl)Cys-, in which Xaa is hydrophobic (preferably Leu), and Yaa (Ala or Ser) and Zaa (Gly or Ala) have small, neutral side chains.. The protein operates within protein modification; lipoprotein biosynthesis (signal peptide cleavage). In terms of biological role, this protein specifically catalyzes the removal of signal peptides from prolipoproteins. This chain is Lipoprotein signal peptidase, found in Rhizorhabdus wittichii (strain DSM 6014 / CCUG 31198 / JCM 15750 / NBRC 105917 / EY 4224 / RW1) (Sphingomonas wittichii).